The chain runs to 273 residues: Putative phosphoenolpyruvate synthase regulatory protein (273 aa).

153-160 (AVSRAGKT) is a binding site for ADP.

This sequence belongs to the pyruvate, phosphate/water dikinase regulatory protein family. PSRP subfamily.

The catalysed reaction is [pyruvate, water dikinase] + ADP = [pyruvate, water dikinase]-phosphate + AMP + H(+). The enzyme catalyses [pyruvate, water dikinase]-phosphate + phosphate + H(+) = [pyruvate, water dikinase] + diphosphate. Functionally, bifunctional serine/threonine kinase and phosphorylase involved in the regulation of the phosphoenolpyruvate synthase (PEPS) by catalyzing its phosphorylation/dephosphorylation. In Xylella fastidiosa (strain M23), this protein is Putative phosphoenolpyruvate synthase regulatory protein.